The primary structure comprises 449 residues: MGRLFGTDGVRGVANLELTAELAYKLGQAGAYVLTSETKHTPKILVGMDTRISGDMLEASLVAGLCSVGAEVACLGIAPTPTVAYLTRYYNADAGVVISASHNPYEFNGIKFFNSKGYKLSDALEERIESIILDNSEKIQLPTGEKIGRKIEIESPLDDYVNFIKSTIKGDLKGLKVAIDCANGASYQVAPVTFFELGADVCVINNEPDGVNINKDCGSTHIEQLQKFVIESGADVGLAFDGDADRVLAVDENGNMVDGDQIMAIIGLELKKQGKLTNNTIVATVMSNLGLDIMAKREGINIVKTKVGDRYVLENMLENGHVLGGEQSGHIIFLEHSTTGDGILTGAQLLNVVKSSGKKLSELASIMQVLPQVLMNARVSNQNKEKYLEDEVICEMCKELENEFRDEGRVLIRPSGTEPLVRVMIEGKDRDYIEKRALELVKVIEERLG.

Catalysis depends on Ser-101, which acts as the Phosphoserine intermediate. Positions 101, 241, 243, and 245 each coordinate Mg(2+). Ser-101 is subject to Phosphoserine.

It belongs to the phosphohexose mutase family. It depends on Mg(2+) as a cofactor. Post-translationally, activated by phosphorylation.

It carries out the reaction alpha-D-glucosamine 1-phosphate = D-glucosamine 6-phosphate. In terms of biological role, catalyzes the conversion of glucosamine-6-phosphate to glucosamine-1-phosphate. This is Phosphoglucosamine mutase from Acetivibrio thermocellus (strain ATCC 27405 / DSM 1237 / JCM 9322 / NBRC 103400 / NCIMB 10682 / NRRL B-4536 / VPI 7372) (Clostridium thermocellum).